A 174-amino-acid polypeptide reads, in one-letter code: Eukaryotic translation elongation factor 1 epsilon-1 (174 aa).

Ala2 is modified (N-acetylalanine). Residues 2–56 form an N-terminal region; sequence AAAAELKLLEKSLGLRPGNKYSAQGERQIPVLQTNNGPSLTGLATIATHLVKQAS. In terms of domain architecture, GST C-terminal spans 50–173; sequence HLVKQASKEH…FIKNRLYANS (124 aa). The linker stretch occupies residues 57-63; sequence KEHLLGS. The C-terminal stretch occupies residues 64 to 152; the sequence is TAEEKALVQQ…SRWFCHIQHY (89 aa). Lys138 is subject to N6-acetyllysine. Positions 153-169 form a coiled coil; that stretch reads PDIRQHLSSVVFIKNRL.

Part of a multisubunit complex that groups tRNA ligases for Arg (RARS1), Asp (DARS1), Gln (QARS1), Ile (IARS1), Leu (LARS1), Lys (KARS1), Met (MARS1) the bifunctional ligase for Glu and Pro (EPRS1) and the auxiliary subunits AIMP1/p43, AIMP2/p38 and EEF1E1/p18. Can interact simultaneously with MARS1 and EPRS1. Forms a linear complex that contains MARS1, EEF1E1, EPRS1 and AIMP2 that is at the core of the multisubunit complex. Interacts with ATM and ATR. The interaction with ATM, which takes place independently of TP53, is induced by DNA damage that may occur during genotoxic stress or cell growth. The interaction with ATR is enhanced by UV irradiation.

The protein localises to the cytoplasm. Its subcellular location is the nucleus. In terms of biological role, positive modulator of ATM response to DNA damage. This Cricetulus griseus (Chinese hamster) protein is Eukaryotic translation elongation factor 1 epsilon-1 (EEF1E1).